The primary structure comprises 243 residues: Probable septum site-determining protein MinC (243 aa).

Belongs to the MinC family. Interacts with MinD and FtsZ.

Its function is as follows. Cell division inhibitor that blocks the formation of polar Z ring septums. Rapidly oscillates between the poles of the cell to destabilize FtsZ filaments that have formed before they mature into polar Z rings. Prevents FtsZ polymerization. This Agathobacter rectalis (strain ATCC 33656 / DSM 3377 / JCM 17463 / KCTC 5835 / VPI 0990) (Eubacterium rectale) protein is Probable septum site-determining protein MinC.